A 494-amino-acid polypeptide reads, in one-letter code: UPF0371 protein SP_0341 (494 aa).

This sequence belongs to the UPF0371 family.

The chain is UPF0371 protein SP_0341 from Streptococcus pneumoniae serotype 4 (strain ATCC BAA-334 / TIGR4).